The chain runs to 424 residues: Kynureninase (424 aa).

Pyridoxal 5'-phosphate contacts are provided by residues L106, T107, 134–137, D219, H222, and Y244; that span reads FPSD. Residue K245 is modified to N6-(pyridoxal phosphate)lysine. The pyridoxal 5'-phosphate site is built by W274 and N302.

It belongs to the kynureninase family. Homodimer. Pyridoxal 5'-phosphate serves as cofactor.

The enzyme catalyses L-kynurenine + H2O = anthranilate + L-alanine + H(+). It carries out the reaction 3-hydroxy-L-kynurenine + H2O = 3-hydroxyanthranilate + L-alanine + H(+). It participates in amino-acid degradation; L-kynurenine degradation; L-alanine and anthranilate from L-kynurenine: step 1/1. It functions in the pathway cofactor biosynthesis; NAD(+) biosynthesis; quinolinate from L-kynurenine: step 2/3. Functionally, catalyzes the cleavage of L-kynurenine (L-Kyn) and L-3-hydroxykynurenine (L-3OHKyn) into anthranilic acid (AA) and 3-hydroxyanthranilic acid (3-OHAA), respectively. This chain is Kynureninase, found in Xanthomonas campestris pv. campestris (strain 8004).